A 224-amino-acid polypeptide reads, in one-letter code: Protein PLANT CADMIUM RESISTANCE 6 (224 aa).

Residues 131 to 151 form a helical membrane-spanning segment; it reads GMLYGLICCLFAIPCVYTCTF.

The protein belongs to the cornifelin family.

Its subcellular location is the membrane. Functionally, may be involved in heavy metals transport. This is Protein PLANT CADMIUM RESISTANCE 6 (PCR6) from Arabidopsis thaliana (Mouse-ear cress).